The following is a 306-amino-acid chain: MGCDGGTIPKRHELVKGPKKVEKVDKDAELVAQWNYCTLSQEILRRPIVACELGRLYNKDAVIEFLLDKSAEKALGKAASHIKSIKNVTELKLSDNPAWEGDKGNTKGDKHDDLQRARFICPVVGLEMNGRHRFCFLRCCGCVFSERALKEIKAEVCHTCGAAFQEDDVIMLNGTKEDVDVLKTRMEERRLRAKLEKKTKKPKAAESVSKPDVSEEAPGPSKVKTGKPEEASLDSREKKTNLAPKSTAMNESSSGKAGKPPCGATKRSIADSEESEAYKSLFTTHSSAKRSKEESAHWVTHTSYCF.

The interval 193–276 (AKLEKKTKKP…RSIADSEESE (84 aa)) is disordered. The segment covering 226–240 (GKPEEASLDSREKKT) has biased composition (basic and acidic residues). A compositionally biased stretch (polar residues) spans 243–255 (APKSTAMNESSSG). Serine 287 bears the Phosphoserine mark.

This sequence belongs to the rtf2 family. As to quaternary structure, interacts with DDI2; probably also interacts with DDI1. In terms of processing, undergoes proteasomal degradation, via DDI1 and DDI2. Removal from stalled replisomes and degradation are required for genome stability.

It localises to the chromosome. Replication termination factor which is a component of the elongating replisome. Required for ATR pathway signaling upon DNA damage and has a positive activity during DNA replication. Might function to facilitate fork pausing at replication fork barriers like the rDNA. May be globally required to stimulate ATR signaling after the fork stalls or encounters a lesion. Interacts with nascent DNA. This is Replication termination factor 2 from Homo sapiens (Human).